We begin with the raw amino-acid sequence, 440 residues long: MIKEIISQYQNKSFLVAYSGGLDSTVLLYKLLEIKKKYYIKIRAIHINHNLTLLSKKWSEHCKKICNINHIPLIVENINIKNKTNNLEEKLRIKRYNIIYNHLFSDEILLTGHHINDQCETFFLSLKRGSGPTGLSSMSFETLFGTKKIVRPFLKKTKIELQTWAKKKKLHWIEDFSNLNIDYDRNFIRNEVIPILEKRWSYFLKNCFRTTIICQQETRLLNDFLRERIYKLIKFDDSLNIENFKNIKQAMCTALIRYWLLLKKIKMPSYKNIQCIYRQMIFSRIDSNPKIILGKHEVRRYKQSLHFIKTQPSLKNTLLFWHKNNIKLTLPNNLGYLIKNNNGTVLPGPKENELINIRFQYEGYVLILGRSKKRKIKKIWQEKNIPPWLRNQIPLLFYNNYFISAIGVFVVNIKNKNRTKCIISWQNDLKSTTNNFFSFY.

Residue 19-24 (SGGLDS) participates in ATP binding.

It belongs to the tRNA(Ile)-lysidine synthase family.

Its subcellular location is the cytoplasm. It catalyses the reaction cytidine(34) in tRNA(Ile2) + L-lysine + ATP = lysidine(34) in tRNA(Ile2) + AMP + diphosphate + H(+). Ligates lysine onto the cytidine present at position 34 of the AUA codon-specific tRNA(Ile) that contains the anticodon CAU, in an ATP-dependent manner. Cytidine is converted to lysidine, thus changing the amino acid specificity of the tRNA from methionine to isoleucine. The sequence is that of tRNA(Ile)-lysidine synthase from Buchnera aphidicola subsp. Acyrthosiphon pisum (strain APS) (Acyrthosiphon pisum symbiotic bacterium).